The primary structure comprises 142 residues: ATP synthase epsilon chain (142 aa).

It belongs to the ATPase epsilon chain family. As to quaternary structure, F-type ATPases have 2 components, CF(1) - the catalytic core - and CF(0) - the membrane proton channel. CF(1) has five subunits: alpha(3), beta(3), gamma(1), delta(1), epsilon(1). CF(0) has three main subunits: a, b and c.

The protein localises to the cell inner membrane. Produces ATP from ADP in the presence of a proton gradient across the membrane. The chain is ATP synthase epsilon chain from Histophilus somni (strain 129Pt) (Haemophilus somnus).